A 345-amino-acid chain; its full sequence is Mycothiol acetyltransferase (345 aa).

N-acetyltransferase domains are found at residues 6 to 149 and 164 to 345; these read DTYE…KAME and FEVL…RGRL. Glu-39 is a 1D-myo-inositol 2-(L-cysteinylamino)-2-deoxy-alpha-D-glucopyranoside binding site. 76–78 contacts acetyl-CoA; the sequence is LAV. Positions 198, 261, and 277 each coordinate 1D-myo-inositol 2-(L-cysteinylamino)-2-deoxy-alpha-D-glucopyranoside. Residues 281 to 283 and 288 to 294 each bind acetyl-CoA; these read VCL and RGRGLGQ. 1D-myo-inositol 2-(L-cysteinylamino)-2-deoxy-alpha-D-glucopyranoside is bound at residue Tyr-315.

It belongs to the acetyltransferase family. MshD subfamily. In terms of assembly, monomer.

It carries out the reaction 1D-myo-inositol 2-(L-cysteinylamino)-2-deoxy-alpha-D-glucopyranoside + acetyl-CoA = mycothiol + CoA + H(+). Its function is as follows. Catalyzes the transfer of acetyl from acetyl-CoA to desacetylmycothiol (Cys-GlcN-Ins) to form mycothiol. The protein is Mycothiol acetyltransferase of Corynebacterium jeikeium (strain K411).